A 143-amino-acid chain; its full sequence is Large ribosomal subunit protein uL16 (143 aa).

The protein belongs to the universal ribosomal protein uL16 family. Part of the 50S ribosomal subunit.

Functionally, binds 23S rRNA and is also seen to make contacts with the A and possibly P site tRNAs. The sequence is that of Large ribosomal subunit protein uL16 from Tropheryma whipplei (strain TW08/27) (Whipple's bacillus).